Reading from the N-terminus, the 1252-residue chain is Putative late blight resistance protein homolog R1B-11 (1252 aa).

Residues 543–566 adopt a coiled-coil conformation; that stretch reads RYSDSLAFLKNQLQVIQTEFESLQ. NB-ARC domains are found at residues 684-736 and 786-830; these read SVRR…RSRI and SYHV…SSEG. 7 LRR repeats span residues 955–980, 998–1026, 1077–1100, 1103–1125, 1126–1149, 1187–1212, and 1213–1236; these read FKFL…PYLR, LWNL…VWDM, LKHL…KVSS, FPKL…ADDA, FPNL…CFTD, LVII…RLSS, and LPGI…DVDA. One can recognise an HMA domain in the interval 1188–1252; it reads VIIKKLVLKF…VGKLNKRDML (65 aa).

This sequence belongs to the disease resistance NB-LRR family.

It localises to the cytoplasm. Its subcellular location is the membrane. Functionally, confers resistance to late blight (Phytophthora infestans) races carrying the avirulence gene Avr1. Resistance proteins guard the plant against pathogens that contain an appropriate avirulence protein via an indirect interaction with this avirulence protein. That triggers a defense system including the hypersensitive response, which restricts the pathogen growth. The polypeptide is Putative late blight resistance protein homolog R1B-11 (R1B-11) (Solanum demissum (Wild potato)).